A 151-amino-acid polypeptide reads, in one-letter code: Molybdopterin synthase catalytic subunit (151 aa).

Residues 38 to 40 (KVR), 104 to 105 (HR), Lys-120, and 127 to 129 (KRE) each bind substrate.

It belongs to the MoaE family. Heterotetramer of 2 MoaD subunits and 2 MoaE subunits. Also stable as homodimer. The enzyme changes between these two forms during catalysis.

It catalyses the reaction 2 [molybdopterin-synthase sulfur-carrier protein]-C-terminal-Gly-aminoethanethioate + cyclic pyranopterin phosphate + H2O = molybdopterin + 2 [molybdopterin-synthase sulfur-carrier protein]-C-terminal Gly-Gly + 2 H(+). It functions in the pathway cofactor biosynthesis; molybdopterin biosynthesis. Functionally, converts molybdopterin precursor Z into molybdopterin. This requires the incorporation of two sulfur atoms into precursor Z to generate a dithiolene group. The sulfur is provided by MoaD. This chain is Molybdopterin synthase catalytic subunit (moaE), found in Yersinia pestis.